A 490-amino-acid chain; its full sequence is Trigger factor (490 aa).

Positions 162–243 (GDFVSIDLSA…VGSIKERELP (82 aa)) constitute a PPIase FKBP-type domain. The segment at 433–490 (VDAVLGPRRGGADEAGAEAEAAEEKPAKAKKSADSEKTDKSEKAEKKSKKKSKDDDAE) is disordered. Residues 454–477 (AEEKPAKAKKSADSEKTDKSEKAE) are compositionally biased toward basic and acidic residues.

It belongs to the FKBP-type PPIase family. Tig subfamily.

The protein localises to the cytoplasm. It catalyses the reaction [protein]-peptidylproline (omega=180) = [protein]-peptidylproline (omega=0). Functionally, involved in protein export. Acts as a chaperone by maintaining the newly synthesized protein in an open conformation. Functions as a peptidyl-prolyl cis-trans isomerase. In Mycobacteroides abscessus (strain ATCC 19977 / DSM 44196 / CCUG 20993 / CIP 104536 / JCM 13569 / NCTC 13031 / TMC 1543 / L948) (Mycobacterium abscessus), this protein is Trigger factor.